The chain runs to 208 residues: MARYLGSKCRLCRREATKLFLKGEKCYSDKCAMERRNYVPGQHGQRRRKVSDYGVHLREKQKVKRSYGLLEAQFRTLYKKAERMKGVTGENLLQLLERRLDNVVYRLGLAASRTEARQIISHKTLLVNGKMVNVPSYLCKPGDVVAVREKSRGQLRIKGALASAMQRGLPSWVEVDAEKLVGTFRSIPERSDLPAEFNENLIVELYSK.

The S4 RNA-binding domain occupies 98–158 (RRLDNVVYRL…EKSRGQLRIK (61 aa)).

The protein belongs to the universal ribosomal protein uS4 family. As to quaternary structure, part of the 30S ribosomal subunit. Contacts protein S5. The interaction surface between S4 and S5 is involved in control of translational fidelity.

In terms of biological role, one of the primary rRNA binding proteins, it binds directly to 16S rRNA where it nucleates assembly of the body of the 30S subunit. Functionally, with S5 and S12 plays an important role in translational accuracy. The sequence is that of Small ribosomal subunit protein uS4 from Magnetococcus marinus (strain ATCC BAA-1437 / JCM 17883 / MC-1).